We begin with the raw amino-acid sequence, 388 residues long: Chorismate synthase (388 aa).

2 residues coordinate NADP(+): Arg39 and Arg45. FMN-binding positions include 130-132, 251-252, Gly296, 311-315, and Arg337; these read RSS, NA, and KPIPT.

This sequence belongs to the chorismate synthase family. As to quaternary structure, homotetramer. FMNH2 serves as cofactor.

It carries out the reaction 5-O-(1-carboxyvinyl)-3-phosphoshikimate = chorismate + phosphate. Its pathway is metabolic intermediate biosynthesis; chorismate biosynthesis; chorismate from D-erythrose 4-phosphate and phosphoenolpyruvate: step 7/7. Catalyzes the anti-1,4-elimination of the C-3 phosphate and the C-6 proR hydrogen from 5-enolpyruvylshikimate-3-phosphate (EPSP) to yield chorismate, which is the branch point compound that serves as the starting substrate for the three terminal pathways of aromatic amino acid biosynthesis. This reaction introduces a second double bond into the aromatic ring system. In Streptococcus pyogenes serotype M3 (strain SSI-1), this protein is Chorismate synthase.